A 43-amino-acid chain; its full sequence is Protein PsbN (43 aa).

A helical transmembrane segment spans residues 5–27 (TLVAISISGLLVSFTGYALYTAF).

Belongs to the PsbN family.

Its subcellular location is the plastid. It localises to the chloroplast thylakoid membrane. In terms of biological role, may play a role in photosystem I and II biogenesis. This Eucalyptus globulus subsp. globulus (Tasmanian blue gum) protein is Protein PsbN.